The sequence spans 855 residues: Inactive rhomboid protein 1 (855 aa).

The Cytoplasmic portion of the chain corresponds to 1–411 (MSEARRDSTS…HRPFFTYWLT (411 aa)). 2 positions are modified to phosphoserine: serine 76 and serine 176. Phosphothreonine occurs at positions 180 and 183. Phosphoserine is present on serine 390. Residues 412-432 (FVHSLVTILAVCIYGIAPVGF) traverse the membrane as a helical segment. Over 433–655 (SQHETVDSVL…NPEVPDQFYR (223 aa)) the chain is Lumenal. N-linked (GlcNAc...) asparagine glycosylation occurs at asparagine 583. A helical transmembrane segment spans residues 656 to 676 (LWLSLFLHAGILHCLVSICFQ). The Cytoplasmic portion of the chain corresponds to 677 to 691 (MTVLRDLEKLAGWHR). A helical transmembrane segment spans residues 692 to 712 (IAIIYLLSGVTGNLASAIFLP). The Lumenal segment spans residues 713 to 714 (YR). A helical transmembrane segment spans residues 715-735 (AEVGPAGSQFGILACLFVELF). Over 736–746 (QSWQILARPWR) the chain is Cytoplasmic. A helical transmembrane segment spans residues 747 to 767 (AFFKLLAVVLFLFTFGLLPWI). At 768–772 (DNFAH) the chain is on the lumenal side. A helical membrane pass occupies residues 773–793 (ISGFISGLFLSFAFLPYISFG). At 794 to 803 (KFDLYRKRCQ) the chain is on the cytoplasmic side. A helical transmembrane segment spans residues 804 to 824 (IIIFQVVFLGLLAGLVVLFYV). The Lumenal portion of the chain corresponds to 825–855 (YPVRCEWCEFLTCIPFTDKFCEKYELDAQLH).

Belongs to the peptidase S54 family. As to quaternary structure, homodimer, or homooligomer. Interacts with TGFA and HBEGF. Interacts with EGF; may retain EGF in the endoplasmic reticulum and regulates its degradation through the endoplasmic reticulum-associated degradation (ERAD). Interacts (via cytoplasmic N-terminus) with FRMD8/iTAP; this interaction leads to mutual protein stabilization. Interacts with ADAM17/TACE. Post-translationally, N-glycosylated. Highly expressed in cerebellum, cerebrum, heart, skeletal muscle, placenta, pancreatic islet and testis. Detected at lower levels in colon, kidney, small intestine and lung.

Its subcellular location is the endoplasmic reticulum membrane. The protein localises to the golgi apparatus membrane. Regulates ADAM17 protease, a sheddase of the epidermal growth factor (EGF) receptor ligands and TNF, thereby plays a role in sleep, cell survival, proliferation, migration and inflammation. Does not exhibit any protease activity on its own. This Homo sapiens (Human) protein is Inactive rhomboid protein 1 (RHBDF1).